A 391-amino-acid chain; its full sequence is Protein-glutamate methylesterase/protein-glutamine glutaminase of group 2 operon (391 aa).

One can recognise a Response regulatory domain in the interval 20–138 (RVMIVDDSVV…EPQAADIFKH (119 aa)). The residue at position 71 (D71) is a 4-aspartylphosphate. In terms of domain architecture, CheB-type methylesterase spans 196–383 (PTAPRVLLIG…PLNQIGPKVV (188 aa)). Active-site residues include S207, H235, and D331.

This sequence belongs to the CheB family. Phosphorylated by CheA. Phosphorylation of the N-terminal regulatory domain activates the methylesterase activity.

It is found in the cytoplasm. It catalyses the reaction [protein]-L-glutamate 5-O-methyl ester + H2O = L-glutamyl-[protein] + methanol + H(+). It carries out the reaction L-glutaminyl-[protein] + H2O = L-glutamyl-[protein] + NH4(+). Its function is as follows. Involved in chemotaxis. Part of a chemotaxis signal transduction system that modulates chemotaxis in response to various stimuli. Catalyzes the demethylation of specific methylglutamate residues introduced into the chemoreceptors (methyl-accepting chemotaxis proteins or MCP) by CheR. Also mediates the irreversible deamidation of specific glutamine residues to glutamic acid. The protein is Protein-glutamate methylesterase/protein-glutamine glutaminase of group 2 operon of Rhodopseudomonas palustris (strain ATCC BAA-98 / CGA009).